The sequence spans 433 residues: tRNA-queuosine alpha-mannosyltransferase (433 aa).

The interval 194 to 244 (PAAKSHIQTSSPSSYPDVEPPEKMLNVAGTNQSHEPTSVTPHQETASPLCG) is disordered. A compositionally biased stretch (polar residues) spans 221–239 (AGTNQSHEPTSVTPHQETA).

It belongs to the glycosyltransferase group 1 family. Glycosyltransferase 4 subfamily.

It localises to the cytoplasm. The protein localises to the nucleus. It carries out the reaction queuosine(34) in tRNA(Asp) + GDP-alpha-D-mannose = O-4''-alpha-D-mannosylqueuosine(34) in tRNA(Asp) + GDP + H(+). In terms of biological role, glycosyltransferase that specifically catalyzes mannosylation of cytoplasmic tRNA(Asp) modified with queuosine at position 34 (queuosine(34)). Mannosylates the cyclopentene moiety of queuosine(34) in tRNA(Asp) to form mannosyl-queuosine(34). Mannosylation of queuosine(34) in tRNA(Asp) is required to slow-down elongation at cognate codons, GAC and GAU, thereby regulating protein translation. The chain is tRNA-queuosine alpha-mannosyltransferase (gtdc1) from Danio rerio (Zebrafish).